The following is a 160-amino-acid chain: Cytochrome b6-f complex subunit 4 (160 aa).

A run of 3 helical transmembrane segments spans residues 36–56 (LLYI…GLAV), 95–115 (LLGI…PFIE), and 131–151 (SVFL…CLPI).

The protein belongs to the cytochrome b family. PetD subfamily. As to quaternary structure, the 4 large subunits of the cytochrome b6-f complex are cytochrome b6, subunit IV (17 kDa polypeptide, PetD), cytochrome f and the Rieske protein, while the 4 small subunits are PetG, PetL, PetM and PetN. The complex functions as a dimer.

Its subcellular location is the cellular thylakoid membrane. Its function is as follows. Component of the cytochrome b6-f complex, which mediates electron transfer between photosystem II (PSII) and photosystem I (PSI), cyclic electron flow around PSI, and state transitions. The sequence is that of Cytochrome b6-f complex subunit 4 from Prochlorococcus marinus subsp. pastoris (strain CCMP1986 / NIES-2087 / MED4).